The chain runs to 202 residues: Holliday junction branch migration complex subunit RuvA (202 aa).

Residues 1–62 are domain I; the sequence is MYEYLHGLIT…DTAQTLYGFS (62 aa). The tract at residues 63-141 is domain II; sequence DFAEKQLFLK…DLAPATDDNT (79 aa). The segment at 142–151 is flexible linker; sequence LFTPEVAPTT. The tract at residues 152-202 is domain III; sequence TENPQLADALAALTALGYRETAVKKITAQLRQFNGQTTNDYLSEGLRLLTK.

It belongs to the RuvA family. In terms of assembly, homotetramer. Forms an RuvA(8)-RuvB(12)-Holliday junction (HJ) complex. HJ DNA is sandwiched between 2 RuvA tetramers; dsDNA enters through RuvA and exits via RuvB. An RuvB hexamer assembles on each DNA strand where it exits the tetramer. Each RuvB hexamer is contacted by two RuvA subunits (via domain III) on 2 adjacent RuvB subunits; this complex drives branch migration. In the full resolvosome a probable DNA-RuvA(4)-RuvB(12)-RuvC(2) complex forms which resolves the HJ.

The protein localises to the cytoplasm. Functionally, the RuvA-RuvB-RuvC complex processes Holliday junction (HJ) DNA during genetic recombination and DNA repair, while the RuvA-RuvB complex plays an important role in the rescue of blocked DNA replication forks via replication fork reversal (RFR). RuvA specifically binds to HJ cruciform DNA, conferring on it an open structure. The RuvB hexamer acts as an ATP-dependent pump, pulling dsDNA into and through the RuvAB complex. HJ branch migration allows RuvC to scan DNA until it finds its consensus sequence, where it cleaves and resolves the cruciform DNA. In Levilactobacillus brevis (strain ATCC 367 / BCRC 12310 / CIP 105137 / JCM 1170 / LMG 11437 / NCIMB 947 / NCTC 947) (Lactobacillus brevis), this protein is Holliday junction branch migration complex subunit RuvA.